The primary structure comprises 263 residues: HTH-type transcriptional repressor NanR (263 aa).

The 69-residue stretch at 30–98 (KKLSEMVEEE…NGERARVSRP (69 aa)) folds into the HTH gntR-type domain. The segment at residues 58-77 (ERELMAFFNVGRPSVREALA) is a DNA-binding region (H-T-H motif).

Belongs to the NanR family.

Functionally, transcriptional repressor that controls expression of the genes required for the catabolism of sialic acids. The chain is HTH-type transcriptional repressor NanR from Salmonella arizonae (strain ATCC BAA-731 / CDC346-86 / RSK2980).